Here is a 434-residue protein sequence, read N- to C-terminus: Nicotinate phosphoribosyltransferase (434 aa).

His-242 is modified (phosphohistidine; by autocatalysis).

The protein belongs to the NAPRTase family. Transiently phosphorylated on a His residue during the reaction cycle. Phosphorylation strongly increases the affinity for substrates and increases the rate of nicotinate D-ribonucleotide production. Dephosphorylation regenerates the low-affinity form of the enzyme, leading to product release.

It carries out the reaction nicotinate + 5-phospho-alpha-D-ribose 1-diphosphate + ATP + H2O = nicotinate beta-D-ribonucleotide + ADP + phosphate + diphosphate. The protein operates within cofactor biosynthesis; NAD(+) biosynthesis; nicotinate D-ribonucleotide from nicotinate: step 1/1. Catalyzes the synthesis of beta-nicotinate D-ribonucleotide from nicotinate and 5-phospho-D-ribose 1-phosphate at the expense of ATP. This chain is Nicotinate phosphoribosyltransferase, found in Agrobacterium fabrum (strain C58 / ATCC 33970) (Agrobacterium tumefaciens (strain C58)).